Reading from the N-terminus, the 619-residue chain is MQLLLIHSDFIEFEAKKPTKFAEEVPEEARSGRLDEALCAFIAVEKFDEDDPDAVVAQAAGEIEEVAKRVKAERIMLYPYAHLSSALSSPETAVRVLRDLESTLKSSFEVARAPFGWYKSFTIRCKGHPLSELSRSIRIGEGEVVSQALKSEAKAVSHWRIMKKGGEMVPPEEFDFRGHERLEKFVRYEIEKSRAVDRIPPHVELMRRLELVDYEPGSDPGNMRYYPKGRLVKSLLESYVTDRALEMGAMEVETPVMYDMDHPTLKKYLDRFPARQYAIEADKKHLFLRFAACFGQFLMGHDMTFSYRSLPLRMFELTRYSFRREQRGELVGLRRLRAFTMPDMHTFCGDMSSAMEEFRKQYEASISVLRDAGLDLKDYEVAIRFTKDFYENNKTFIEGLVDIVDKPVLIEMWDERFFYFVLKFEFNFVDALDKASALSTVQIDVENAERYDIGYVDAEGNRQRPIILHCSPSGAIERLMYALLEKQAMIAANGGLPMLPTWLSPTQVRIIPVAERHHARAMEVAEQLNFRVDVDDRDETVGKKIRDAGREWVPYVAVVGDEELSTGLLTVTVRSESTSNQKIKMSVEELRARLQSETAGRPWRRLPLPVRLSERPKFV.

The editing domain stretch occupies residues 1–143; sequence MQLLLIHSDF…SRSIRIGEGE (143 aa). The interval 201 to 500 is catalytic; sequence PHVELMRRLE…AANGGLPMLP (300 aa). 3 residues coordinate Zn(2+): C293, H345, and H469.

The protein belongs to the class-II aminoacyl-tRNA synthetase family. As to quaternary structure, homodimer. The cofactor is Zn(2+).

The protein resides in the cytoplasm. It catalyses the reaction tRNA(Thr) + L-threonine + ATP = L-threonyl-tRNA(Thr) + AMP + diphosphate + H(+). In terms of biological role, catalyzes the attachment of threonine to tRNA(Thr) in a two-step reaction: L-threonine is first activated by ATP to form Thr-AMP and then transferred to the acceptor end of tRNA(Thr). Also edits incorrectly charged L-seryl-tRNA(Thr). The chain is Threonine--tRNA ligase from Methanothrix thermoacetophila (strain DSM 6194 / JCM 14653 / NBRC 101360 / PT) (Methanosaeta thermophila).